Consider the following 351-residue polypeptide: uncharacterized protein (351 aa).

This is an uncharacterized protein from Schizosaccharomyces pombe (strain 972 / ATCC 24843) (Fission yeast).